The following is a 968-amino-acid chain: uncharacterized protein (968 aa).

Disordered stretches follow at residues 124-177, 348-437, 572-595, 608-627, and 837-877; these read SSIS…FSFP, QEDS…VNDS, TTTT…QQNT, PKAS…GSSK, and KASK…KKGK. Residues 131-157 show a composition bias toward polar residues; that stretch reads TIESNYLSNPSSPCQSTPILESSTPFS. Low complexity-rich tracts occupy residues 158–177, 352–431, and 572–593; these read QKLM…FSFP, NNNN…NCNN, and TTTT…QQQQ. Low complexity predominate over residues 841 to 857; sequence DSSSSPTASSAAPGDSS.

This is an uncharacterized protein from Dictyostelium discoideum (Social amoeba).